The sequence spans 485 residues: Bcl-2-like protein 13 (485 aa).

Residues 14-30 (ETKYVVLSYLGLLSQEK) carry the BH4 motif. A Phosphoserine modification is found at serine 38. Residues 100-116 (MEDCLAHLGEKVSQELK) carry the BH3 motif. The BH1 signature appears at 147–157 (ASGWNKILVPL). Positions 193–206 (YIIQQGGWGTVFSL) match the BH2 motif. The disordered stretch occupies residues 218 to 248 (AEDSNDIYILPSDNSGQVSPPESPTVTTSWQ). Over residues 229–248 (SDNSGQVSPPESPTVTTSWQ) the composition is skewed to polar residues. An A repeat occupies 246–256 (SWQSESLPVSL). 11 positions are modified to phosphoserine: serine 259, serine 261, serine 303, serine 326, serine 371, serine 375, serine 410, serine 420, serine 426, serine 429, and serine 444. One copy of the A; approximate repeat lies at 261–271 (SWHTESLPVSL). A disordered region spans residues 418 to 451 (EESLVEELSPASEKKPVPPSEGKSRLSPAGEMKP). Residues 425 to 441 (LSPASEKKPVPPSEGKS) form a B repeat. One copy of the B; approximate repeat lies at 443–459 (LSPAGEMKPMPLSEGKS). The helical transmembrane segment at 460–480 (ILLFGGAAAVAILAVAIGVAL) threads the bilayer.

This sequence belongs to the Bcl-2 family. In terms of assembly, monomer. Ubiquitous, with the highest levels of expression in heart, placenta and pancreas.

It localises to the mitochondrion membrane. The protein localises to the nucleus. In terms of biological role, may promote the activation of caspase-3 and apoptosis. This chain is Bcl-2-like protein 13 (BCL2L13), found in Homo sapiens (Human).